The following is a 401-amino-acid chain: uncharacterized protein (401 aa).

It belongs to the herpesviridae BTRF1 family.

This is an uncharacterized protein from Connochaetes taurinus (Blue wildebeest).